The primary structure comprises 437 residues: Phosphomethylpyrimidine synthase (437 aa).

Substrate contacts are provided by residues asparagine 69, methionine 98, tyrosine 127, histidine 163, 185-187 (SRG), 226-229 (DACR), and glutamate 265. Histidine 269 lines the Zn(2+) pocket. Tyrosine 292 contacts substrate. Histidine 333 is a Zn(2+) binding site. Residues cysteine 409, cysteine 412, and cysteine 416 each coordinate [4Fe-4S] cluster.

Belongs to the ThiC family. The cofactor is [4Fe-4S] cluster.

The catalysed reaction is 5-amino-1-(5-phospho-beta-D-ribosyl)imidazole + S-adenosyl-L-methionine = 4-amino-2-methyl-5-(phosphooxymethyl)pyrimidine + CO + 5'-deoxyadenosine + formate + L-methionine + 3 H(+). The protein operates within cofactor biosynthesis; thiamine diphosphate biosynthesis. Its function is as follows. Catalyzes the synthesis of the hydroxymethylpyrimidine phosphate (HMP-P) moiety of thiamine from aminoimidazole ribotide (AIR) in a radical S-adenosyl-L-methionine (SAM)-dependent reaction. In Alkaliphilus metalliredigens (strain QYMF), this protein is Phosphomethylpyrimidine synthase.